The sequence spans 427 residues: Peptidase B (427 aa).

Mn(2+) is bound by residues K195 and D200. K207 is a catalytic residue. 3 residues coordinate Mn(2+): D218, D277, and E279. Residue R281 is part of the active site.

Belongs to the peptidase M17 family. Homohexamer. Requires Mn(2+) as cofactor.

It is found in the cytoplasm. The catalysed reaction is Release of an N-terminal amino acid, Xaa, from a peptide or arylamide. Xaa is preferably Glu or Asp but may be other amino acids, including Leu, Met, His, Cys and Gln.. Probably plays an important role in intracellular peptide degradation. This chain is Peptidase B, found in Escherichia coli (strain UTI89 / UPEC).